Consider the following 30-residue polypeptide: Alanine carboxypeptidase (30 aa).

It carries out the reaction Release of a C-terminal alanine from a peptide or a variety of pteroyl or acyl groups.. This is Alanine carboxypeptidase from Geobacillus stearothermophilus (Bacillus stearothermophilus).